A 445-amino-acid polypeptide reads, in one-letter code: N-succinylarginine dihydrolase (445 aa).

Substrate contacts are provided by residues 19-28, Asn-110, and 137-138; these read AGLSYGNVAS and HR. The active site involves Glu-174. Arg-214 lines the substrate pocket. His-250 is an active-site residue. Residues Asp-252 and Asn-363 each contribute to the substrate site. Cys-369 serves as the catalytic Nucleophile.

This sequence belongs to the succinylarginine dihydrolase family. As to quaternary structure, homodimer.

The catalysed reaction is N(2)-succinyl-L-arginine + 2 H2O + 2 H(+) = N(2)-succinyl-L-ornithine + 2 NH4(+) + CO2. Its pathway is amino-acid degradation; L-arginine degradation via AST pathway; L-glutamate and succinate from L-arginine: step 2/5. Its function is as follows. Catalyzes the hydrolysis of N(2)-succinylarginine into N(2)-succinylornithine, ammonia and CO(2). The polypeptide is N-succinylarginine dihydrolase (Aeromonas hydrophila subsp. hydrophila (strain ATCC 7966 / DSM 30187 / BCRC 13018 / CCUG 14551 / JCM 1027 / KCTC 2358 / NCIMB 9240 / NCTC 8049)).